Here is a 196-residue protein sequence, read N- to C-terminus: GTP cyclohydrolase 1 (196 aa).

The Zn(2+) site is built by cysteine 86, histidine 89, and cysteine 158.

It belongs to the GTP cyclohydrolase I family. Homomer.

The enzyme catalyses GTP + H2O = 7,8-dihydroneopterin 3'-triphosphate + formate + H(+). The protein operates within cofactor biosynthesis; 7,8-dihydroneopterin triphosphate biosynthesis; 7,8-dihydroneopterin triphosphate from GTP: step 1/1. The polypeptide is GTP cyclohydrolase 1 (Clostridium botulinum (strain Loch Maree / Type A3)).